We begin with the raw amino-acid sequence, 154 residues long: Transcription antitermination protein NusB (154 aa).

This sequence belongs to the NusB family.

Its function is as follows. Involved in transcription antitermination. Required for transcription of ribosomal RNA (rRNA) genes. Binds specifically to the boxA antiterminator sequence of the ribosomal RNA (rrn) operons. This is Transcription antitermination protein NusB from Oleidesulfovibrio alaskensis (strain ATCC BAA-1058 / DSM 17464 / G20) (Desulfovibrio alaskensis).